Consider the following 106-residue polypeptide: Cuticle protein CP14.6 (106 aa).

The signal sequence occupies residues 1-16 (MKSFFVVALLVAAAAA). The Chitin-binding type R&amp;R domain maps to 37–106 (PQHYSYSVET…PQGAHLPVAA (70 aa)).

Its function is as follows. Component of the cuticle of tobacco hornworm. The sequence is that of Cuticle protein CP14.6 (CP14.6) from Manduca sexta (Tobacco hawkmoth).